The sequence spans 422 residues: Elongation factor 1-alpha (422 aa).

The tr-type G domain occupies 5 to 221; it reads KPHQNLAVIG…NDLPEPQPPT (217 aa). Positions 14–21 are G1; sequence GHVDHGKS. 14–21 contacts GTP; that stretch reads GHVDHGKS. Ser-21 lines the Mg(2+) pocket. Positions 70-74 are G2; it reads GVTID. A G3 region spans residues 91-94; the sequence is DCPG. Residues 91-95 and 146-149 each bind GTP; these read DCPGH and NKMD. The tract at residues 146–149 is G4; that stretch reads NKMD. The segment at 185–187 is G5; sequence SAF.

This sequence belongs to the TRAFAC class translation factor GTPase superfamily. Classic translation factor GTPase family. EF-Tu/EF-1A subfamily.

It is found in the cytoplasm. It catalyses the reaction GTP + H2O = GDP + phosphate + H(+). GTP hydrolase that promotes the GTP-dependent binding of aminoacyl-tRNA to the A-site of ribosomes during protein biosynthesis. The sequence is that of Elongation factor 1-alpha from Natronomonas pharaonis (strain ATCC 35678 / DSM 2160 / CIP 103997 / JCM 8858 / NBRC 14720 / NCIMB 2260 / Gabara) (Halobacterium pharaonis).